A 389-amino-acid chain; its full sequence is 1-deoxy-D-xylulose 5-phosphate reductoisomerase (389 aa).

Residues Thr-10, Gly-11, Ser-12, Ile-13, Asn-38, and Asn-122 each contribute to the NADPH site. Residue Lys-123 participates in 1-deoxy-D-xylulose 5-phosphate binding. Glu-124 contacts NADPH. Residue Asp-148 participates in Mn(2+) binding. Positions 149, 150, 173, and 196 each coordinate 1-deoxy-D-xylulose 5-phosphate. Glu-150 lines the Mn(2+) pocket. Gly-202 is a binding site for NADPH. Residues Ser-209, Asn-214, Lys-215, and Glu-218 each coordinate 1-deoxy-D-xylulose 5-phosphate. Glu-218 contributes to the Mn(2+) binding site.

It belongs to the DXR family. Mg(2+) serves as cofactor. It depends on Mn(2+) as a cofactor.

The enzyme catalyses 2-C-methyl-D-erythritol 4-phosphate + NADP(+) = 1-deoxy-D-xylulose 5-phosphate + NADPH + H(+). The protein operates within isoprenoid biosynthesis; isopentenyl diphosphate biosynthesis via DXP pathway; isopentenyl diphosphate from 1-deoxy-D-xylulose 5-phosphate: step 1/6. Functionally, catalyzes the NADPH-dependent rearrangement and reduction of 1-deoxy-D-xylulose-5-phosphate (DXP) to 2-C-methyl-D-erythritol 4-phosphate (MEP). The polypeptide is 1-deoxy-D-xylulose 5-phosphate reductoisomerase (Wolbachia sp. subsp. Brugia malayi (strain TRS)).